The following is a 1482-amino-acid chain: Glutamate receptor ionotropic, NMDA 2B (1482 aa).

The N-terminal stretch at 1–26 (MKPSAECCSPKFWLVLAVLAVSGSKA) is a signal peptide. At 27–557 (RSQKSPPSIG…SAFLEPFSAD (531 aa)) the chain is on the extracellular side. Asparagine 74 is a glycosylation site (N-linked (GlcNAc...) asparagine). The cysteines at positions 86 and 321 are disulfide-linked. Positions 127 and 284 each coordinate Zn(2+). 4 N-linked (GlcNAc...) asparagine glycosylation sites follow: asparagine 341, asparagine 348, asparagine 444, and asparagine 491. 2 disulfide bridges follow: cysteine 429-cysteine 456 and cysteine 436-cysteine 457. L-glutamate contacts are provided by threonine 514 and arginine 519. Asparagine 542 carries an N-linked (GlcNAc...) asparagine glycan. The helical transmembrane segment at 558–576 (VWVMMFVMLLIVSAVAVFV) threads the bilayer. Residues 577 to 603 (FEYFSPVGYNRCLADGREPGGPSFTIG) lie on the Cytoplasmic side of the membrane. The discontinuously helical intramembrane region spans 604-623 (KAIWLLWGLVFNNSVPVQNP). Residues 604 to 623 (KAIWLLWGLVFNNSVPVQNP) are pore-forming. Residues 624–630 (KGTTSKI) lie on the Cytoplasmic side of the membrane. A helical membrane pass occupies residues 631 to 646 (MVSVWAFFAVIFLASY). Residues 647-817 (TANLAAFMIQ…VMSSQLDIDN (171 aa)) are Extracellular-facing. Asparagine 688 carries an N-linked (GlcNAc...) asparagine glycan. Residues serine 690, threonine 691, and aspartate 732 each coordinate L-glutamate. A disulfide bridge links cysteine 746 with cysteine 801. The chain crosses the membrane as a helical span at residues 818–837 (MAGVFYMLGAAMALSLITFI). The Cytoplasmic portion of the chain corresponds to 838-1482 (CEHLFYWQFR…EKLSSIESDV (645 aa)). Serine 882, serine 886, serine 917, and serine 920 each carry phosphoserine. Tyrosine 962 and tyrosine 1039 each carry phosphotyrosine. Serine 1058, serine 1061, and serine 1064 each carry phosphoserine. Phosphotyrosine occurs at positions 1109 and 1133. Residue serine 1143 is modified to Phosphoserine. Tyrosine 1155 bears the Phosphotyrosine mark. Residues 1161-1194 (DFKRDSVSGGGPCTNRSHLKHGTGEKHGVVGGVP) are disordered. Phosphoserine is present on residues serine 1255 and serine 1259. The disordered stretch occupies residues 1269–1301 (PVAVTSNASSTKYPQSPTNSKAQKKNRNKLRRQ). Residues 1272–1289 (VTSNASSTKYPQSPTNSK) are compositionally biased toward polar residues. Over residues 1290–1301 (AQKKNRNKLRRQ) the composition is skewed to basic residues. The interaction with DAPK1 stretch occupies residues 1292 to 1304 (KKNRNKLRRQHSY). At serine 1303 the chain carries Phosphoserine. A Phosphotyrosine modification is found at tyrosine 1472. Positions 1480 to 1482 (SDV) match the PDZ-binding motif.

The protein belongs to the glutamate-gated ion channel (TC 1.A.10.1) family. NR2B/GRIN2B subfamily. In terms of assembly, heterotetramer. Forms heterotetrameric channels composed of two GluN1/zeta subunits (GRIN1), and two identical GluN2/epsilon subunits (GRIN2A, GRIN2B, GRIN2C or GRIN2D) or GluN3 subunits (GRIN3A or GRIN3B) (in vitro). Can also form heterotetrameric channels that contain at least two GluN1 subunits and at least two different GluN2 subunits (or a combination of one GluN2 and one GluN3 subunits) (in vitro). In vivo, the subunit composition may depend on the expression levels of the different subunits. Found in a complex with GRIN1, GRIN3A and PPP2CB. Found in a complex with GRIN1 and GRIN3B. Interacts with MAGI3. Interacts with HIP1 and NETO1. Interacts with PDZ domains of PATJ, DLG3 and DLG4. Interacts with DAPK1. Found in a complex with GRIN1 and PRR7. Interacts with PRR7. Interacts with CAMK2A. Interacts with ARC; preventing ARC oligomerization. Interacts with TMEM25. Interacts (via the extreme C-terminus) with FRMPD2 (via the second PDZ domain); the interaction is direct and is likely to promote NMDAR-mediated neural signal transmission. Interacts with FAM81A; the interaction facilitates condensate formation via liquid-liquid phase separation. Post-translationally, phosphorylated on tyrosine residues. Phosphorylation at Ser-1303 by DAPK1 enhances synaptic NMDA receptor channel activity. Expressed in the hippocampus including the dentate gyrus (at protein level). Detected in adult olfactory bulb, brain cortex, hippocampus, striatum, thalamus, superior colliculus, with much lower levels in inferior colliculus, midbrain and cerebellum.

It is found in the cell membrane. The protein localises to the postsynaptic cell membrane. It localises to the late endosome. Its subcellular location is the lysosome. The protein resides in the cytoplasm. It is found in the cytoskeleton. It catalyses the reaction Ca(2+)(in) = Ca(2+)(out). The enzyme catalyses Na(+)(in) = Na(+)(out). The catalysed reaction is K(+)(in) = K(+)(out). Its activity is regulated as follows. NMDA glutamate receptor activity is inhibited by micromolar levels of zinc ions. NMDA glutamate receptor activity is inhibited by ifenprodil. Component of N-methyl-D-aspartate (NMDA) receptors (NMDARs) that function as heterotetrameric, ligand-gated cation channels with high calcium permeability and voltage-dependent block by Mg(2+). Participates in synaptic plasticity for learning and memory formation by contributing to the long-term depression (LTD) of hippocampus membrane currents. Channel activation requires binding of the neurotransmitter L-glutamate to the GluN2 subunit, glycine or D-serine binding to the GluN1 subunit, plus membrane depolarization to eliminate channel inhibition by Mg(2+). NMDARs mediate simultaneously the potasium efflux and the influx of calcium and sodium. Each GluN2 subunit confers differential attributes to channel properties, including activation, deactivation and desensitization kinetics, pH sensitivity, Ca2(+) permeability, and binding to allosteric modulators. In concert with DAPK1 at extrasynaptic sites, acts as a central mediator for stroke damage. Its phosphorylation at Ser-1303 by DAPK1 enhances synaptic NMDA receptor channel activity inducing injurious Ca2+ influx through them, resulting in an irreversible neuronal death. This Rattus norvegicus (Rat) protein is Glutamate receptor ionotropic, NMDA 2B.